The sequence spans 232 residues: Modulator of macroautophagy TMEM150B (232 aa).

At 1–6 the chain is on the cytoplasmic side; sequence MWAWAL. Residues 7 to 27 traverse the membrane as a helical segment; that stretch reads LPVFLAVFGTVGLWAVYAIAV. The Extracellular segment spans residues 28–50; sequence SNNSVNITIEFPYISTCGAYTPQ. Asn-29 and Asn-33 each carry an N-linked (GlcNAc...) asparagine glycan. Residues 51 to 71 form a helical membrane-spanning segment; the sequence is SCLFAQICNICCVLALWIVVI. Over 72–83 the chain is Cytoplasmic; the sequence is RFQQIRDLGRSS. A helical transmembrane segment spans residues 84–104; that stretch reads HLNTAGLVLGFISSIGISILG. The Extracellular portion of the chain corresponds to 105 to 115; that stretch reads NFQQTIIQEVH. A helical membrane pass occupies residues 116–136; that stretch reads LLGALMAFFLGLAYFWIQAFI. At 137-153 the chain is on the cytoplasmic side; sequence TYFSPPSRDNKWLVPVR. A helical transmembrane segment spans residues 154 to 174; the sequence is FVLCSQCTCMVICMFVLHSTG. The Extracellular portion of the chain corresponds to 175-177; the sequence is FRS. Residues 178–198 form a helical membrane-spanning segment; it reads AAAICEWILVMCFFALFGVFA. Residues 199 to 232 are Cytoplasmic-facing; the sequence is AEFRHIDFHKLTVQKEGLKVANNDNVVWTVQDVQ.

This sequence belongs to the DRAM/TMEM150 family.

It is found in the cell membrane. Its subcellular location is the endosome membrane. It localises to the cytoplasmic vesicle. The protein localises to the autophagosome membrane. Functionally, modulator of macroautophagy that causes accumulation of autophagosomes under basal conditions and enhances autophagic flux. Represses cell death and promotes long-term clonogenic survival of cells grown in the absence of glucose in a macroautophagy-independent manner. May have some role in extracellular matrix engulfment or growth factor receptor recycling, both of which can modulate cell survival. The protein is Modulator of macroautophagy TMEM150B of Danio rerio (Zebrafish).